The primary structure comprises 313 residues: Ribosomal RNA small subunit methyltransferase H (313 aa).

S-adenosyl-L-methionine contacts are provided by residues Gly35 to His37, Asp55, Phe81, Asp103, and Gln110.

This sequence belongs to the methyltransferase superfamily. RsmH family.

It is found in the cytoplasm. The catalysed reaction is cytidine(1402) in 16S rRNA + S-adenosyl-L-methionine = N(4)-methylcytidine(1402) in 16S rRNA + S-adenosyl-L-homocysteine + H(+). Specifically methylates the N4 position of cytidine in position 1402 (C1402) of 16S rRNA. The polypeptide is Ribosomal RNA small subunit methyltransferase H (Pseudomonas syringae pv. tomato (strain ATCC BAA-871 / DC3000)).